The chain runs to 459 residues: Glutamyl-tRNA reductase (459 aa).

Substrate is bound by residues 49-52 (TCNR), Ser-109, 114-116 (ETQ), and Gln-120. The active-site Nucleophile is Cys-50. 189 to 194 (GAGKMG) lines the NADP(+) pocket.

This sequence belongs to the glutamyl-tRNA reductase family. As to quaternary structure, homodimer.

The enzyme catalyses (S)-4-amino-5-oxopentanoate + tRNA(Glu) + NADP(+) = L-glutamyl-tRNA(Glu) + NADPH + H(+). Its pathway is porphyrin-containing compound metabolism; protoporphyrin-IX biosynthesis; 5-aminolevulinate from L-glutamyl-tRNA(Glu): step 1/2. Functionally, catalyzes the NADPH-dependent reduction of glutamyl-tRNA(Glu) to glutamate 1-semialdehyde (GSA). This chain is Glutamyl-tRNA reductase, found in Halalkalibacterium halodurans (strain ATCC BAA-125 / DSM 18197 / FERM 7344 / JCM 9153 / C-125) (Bacillus halodurans).